Consider the following 62-residue polypeptide: Sperm protamine P1 (62 aa).

Positions 1–62 are disordered; it reads MARYRRHSRS…RYSRRGRRRY (62 aa).

Belongs to the protamine P1 family. In terms of tissue distribution, testis.

The protein localises to the nucleus. It is found in the chromosome. Functionally, protamines substitute for histones in the chromatin of sperm during the haploid phase of spermatogenesis. They compact sperm DNA into a highly condensed, stable and inactive complex. The polypeptide is Sperm protamine P1 (PRM1) (Neophascogale lorentzii (Long-clawed marsupial mouse)).